The chain runs to 126 residues: Histone H2B.5 (126 aa).

Basic and acidic residues predominate over residues 1–27 (MAPKAEKKPSEKAPKADKKITKEGGSE). Residues 1-34 (MAPKAEKKPSEKAPKADKKITKEGGSERKKKTKK) are disordered. The residue at position 2 (alanine 2) is a N,N,N-trimethylalanine; alternate. The residue at position 2 (alanine 2) is a N,N-dimethylalanine; alternate. N-methylalanine; alternate is present on alanine 2. Lysine 4 is subject to N6-methyllysine. An N6-acetyllysine mark is found at lysine 7, lysine 12, lysine 18, and lysine 19. Lysine 122 participates in a covalent cross-link: Glycyl lysine isopeptide (Lys-Gly) (interchain with G-Cter in ubiquitin).

Belongs to the histone H2B family. In terms of assembly, the nucleosome is a histone octamer containing two molecules each of H2A, H2B, H3 and H4 assembled in one H3-H4 heterotetramer and two H2A-H2B heterodimers. The octamer wraps approximately 147 bp of DNA. In terms of processing, can be acetylated to form H2BK6ac, H2BK33ac and H2BK34ac. Monoubiquitinated by BRE1 to form H2BK143ub1 and deubiquitinated by UBP26. Required for heterochromatic histone H3 di- and trimethylation at H3K4me. May give a specific tag for epigenetic transcriptional activation.

It is found in the nucleus. The protein resides in the chromosome. Core component of nucleosome. Nucleosomes wrap and compact DNA into chromatin, limiting DNA accessibility to the cellular machineries which require DNA as a template. Histones thereby play a central role in transcription regulation, DNA repair, DNA replication and chromosomal stability. DNA accessibility is regulated via a complex set of post-translational modifications of histones, also called histone code, and nucleosome remodeling. This Arabidopsis thaliana (Mouse-ear cress) protein is Histone H2B.5.